The chain runs to 269 residues: Chromophore lyase CRL, chloroplastic (269 aa).

The chain crosses the membrane as a helical span at residues 19-36; that stretch reads ARGLVVKTLVLIGGALLI.

Belongs to the CpcT/CpeT biliprotein lyase family. As to expression, mostly expressed in shoot apices, to a lower extent, in leaves, inflorescence stems, buds and cotyledons, and, at low levels, in roots and siliques.

It localises to the plastid. The protein resides in the chloroplast outer membrane. Its function is as follows. Covalently attaches a chromophore to Cys residue(s) of phycobiliproteins. Required for plastid division, and involved in cell differentiation and regulation of the cell division plane. Maintenance of plastid homeostasis controls plant preconditioning to stress and stress acclimation. Functionally, confers sensitivity to cabbage leaf curl virus (CaLCuV), probably by supporting viral movement. In Arabidopsis thaliana (Mouse-ear cress), this protein is Chromophore lyase CRL, chloroplastic (CRL).